We begin with the raw amino-acid sequence, 345 residues long: NADH-quinone oxidoreductase subunit H (345 aa).

8 helical membrane passes run 13-33 (VLII…LLFL), 84-104 (FMLA…VIPF), 115-135 (VAIL…IMGG), 161-181 (IGLI…SAIV), 190-210 (FFSW…ISAL), 248-268 (YIAI…GWLS), 278-298 (IWMV…KAIV), and 309-329 (LGWK…AFAA).

The protein belongs to the complex I subunit 1 family. As to quaternary structure, NDH-1 is composed of 14 different subunits. Subunits NuoA, H, J, K, L, M, N constitute the membrane sector of the complex.

Its subcellular location is the cell inner membrane. It carries out the reaction a quinone + NADH + 5 H(+)(in) = a quinol + NAD(+) + 4 H(+)(out). Functionally, NDH-1 shuttles electrons from NADH, via FMN and iron-sulfur (Fe-S) centers, to quinones in the respiratory chain. The immediate electron acceptor for the enzyme in this species is believed to be ubiquinone. Couples the redox reaction to proton translocation (for every two electrons transferred, four hydrogen ions are translocated across the cytoplasmic membrane), and thus conserves the redox energy in a proton gradient. This subunit may bind ubiquinone. This is NADH-quinone oxidoreductase subunit H from Dinoroseobacter shibae (strain DSM 16493 / NCIMB 14021 / DFL 12).